The sequence spans 1464 residues: Gag-Pol polyprotein (1464 aa).

Residue Gly2 is the site of N-myristoyl glycine; by host attachment. The tract at residues 7–31 is interaction with Gp41; that stretch reads VLRGKKADELERIRLRPGGKKKYRL. A Nuclear export signal motif is present at residues 16-22; the sequence is LERIRLR. A Nuclear localization signal motif is present at residues 26–32; it reads KKKYRLK. The disordered stretch occupies residues 111 to 136; sequence ETGTAEKMPSTSRPTAPSSEKGGNYP. The span at 119 to 128 shows a compositional bias: polar residues; the sequence is PSTSRPTAPS. Tyr135 carries the phosphotyrosine; by host modification. Residues 191-228 are interaction with human PPIA/CYPA and NUP153; that stretch reads NCVGDHQAAMQIIREIINEEAAEWDVQHPIPGPLPAGQ. A dimerization/Multimerization of capsid protein p24 region spans residues 279–365; sequence YNPTNILDIK…GGPGQKARLM (87 aa). 2 consecutive CCHC-type zinc fingers follow at residues 389–406 and 410–427; these read FKCW…QCRA and QGCW…NCPD. The tract at residues 432 to 500 is disordered; it reads FLRTGPLGKE…RGLTAPRAGG (69 aa). Over residues 456–469 the composition is skewed to low complexity; the sequence is TNSTPSGSSSGSTG. Residues 473 to 485 show a composition bias toward basic and acidic residues; sequence AAREKTERAERET. The dimerization of protease stretch occupies residues 514 to 518; that stretch reads PQFSL. Positions 533–602 constitute a Peptidase A2 domain; that stretch reads VEVLLDTGAD…TPINIFGRNI (70 aa). Residue Asp538 is the For protease activity; shared with dimeric partner of the active site. Dimerization of protease stretches follow at residues 562 to 568 and 601 to 613; these read GIGGFIN and NILT…LNLP. The region spanning 656-846 is the Reverse transcriptase domain; it reads EGQLEEAPPT…PPYHWMGYEL (191 aa). Mg(2+) contacts are provided by Asp722, Asp797, and Asp798. The tract at residues 839–847 is RT 'primer grip'; sequence YHWMGYELW. A Tryptophan repeat motif motif is present at residues 1009–1025; the sequence is WEQWWDNYWQVTWIPDW. Residues 1045–1168 enclose the RNase H type-1 domain; it reads IPGAETFYTD…VDHLVSQGIR (124 aa). Mg(2+)-binding residues include Asp1054, Glu1089, Asp1109, and Asp1160. The Integrase-type zinc finger occupies 1174-1215; that stretch reads EKIEPAQEEHEKYHSNVKELSHKFGIPNLVARQIVNSCAQCQ. Zn(2+)-binding residues include His1183, His1187, Cys1211, and Cys1214. Residues 1224–1375 form the Integrase catalytic domain; it reads QVNAELGTWQ…TPSERLINMI (152 aa). Residues Asp1235, Asp1287, and Glu1323 each contribute to the Mg(2+) site. A DNA-binding region (integrase-type) is located at residues 1394–1441; that stretch reads FRVYFREGRDQLWKGPGELLWKGEGAVLVKVGTDIKIIPRRKAKIIRD.

As to quaternary structure, homotrimer; further assembles as hexamers of trimers. Interacts with gp41 (via C-terminus). Interacts with host CALM1; this interaction induces a conformational change in the Matrix protein, triggering exposure of the myristate group. Interacts with host AP3D1; this interaction allows the polyprotein trafficking to multivesicular bodies during virus assembly. Part of the pre-integration complex (PIC) which is composed of viral genome, matrix protein, Vpr and integrase. Homodimer; the homodimer further multimerizes as homohexamers or homopentamers. Interacts with human PPIA/CYPA. Interacts with human NUP153. Interacts with host PDZD8; this interaction stabilizes the capsid. Interacts with monkey TRIM5; this interaction destabilizes the capsid. In terms of assembly, homodimer, whose active site consists of two apposed aspartic acid residues. As to quaternary structure, heterodimer of p66 RT and p51 RT (RT p66/p51). Heterodimerization of RT is essential for DNA polymerase activity. The overall folding of the subdomains is similar in p66 RT and p51 RT but the spatial arrangements of the subdomains are dramatically different. Homotetramer; may further associate as a homohexadecamer. Part of the pre-integration complex (PIC) which is composed of viral genome, matrix protein, Vpr and integrase. Interacts with human SMARCB1/INI1 and human PSIP1/LEDGF isoform 1. Interacts with human KPNA3; this interaction might play a role in nuclear import of the pre-integration complex. Interacts with human NUP153; this interaction might play a role in nuclear import of the pre-integration complex. The cofactor is Mg(2+). Post-translationally, specific enzymatic cleavages by the viral protease yield mature proteins. The protease is released by autocatalytic cleavage. The polyprotein is cleaved during and after budding, this process is termed maturation. Proteolytic cleavage of p66 RT removes the RNase H domain to yield the p51 RT subunit. Nucleocapsid protein p7 might be further cleaved after virus entry.

The protein localises to the host cell membrane. It localises to the host endosome. It is found in the host multivesicular body. The protein resides in the virion membrane. Its subcellular location is the host nucleus. The protein localises to the host cytoplasm. It localises to the virion. The enzyme catalyses Endopeptidase for which the P1 residue is preferably hydrophobic.. It catalyses the reaction Endohydrolysis of RNA in RNA/DNA hybrids. Three different cleavage modes: 1. sequence-specific internal cleavage of RNA. Human immunodeficiency virus type 1 and Moloney murine leukemia virus enzymes prefer to cleave the RNA strand one nucleotide away from the RNA-DNA junction. 2. RNA 5'-end directed cleavage 13-19 nucleotides from the RNA end. 3. DNA 3'-end directed cleavage 15-20 nucleotides away from the primer terminus.. The catalysed reaction is 3'-end directed exonucleolytic cleavage of viral RNA-DNA hybrid.. It carries out the reaction DNA(n) + a 2'-deoxyribonucleoside 5'-triphosphate = DNA(n+1) + diphosphate. Protease: The viral protease is inhibited by many synthetic protease inhibitors (PIs), such as amprenavir, atazanavir, indinavir, loprinavir, nelfinavir, ritonavir and saquinavir. Use of protease inhibitors in tritherapy regimens permit more ambitious therapeutic strategies. Reverse transcriptase/ribonuclease H: RT can be inhibited either by nucleoside RT inhibitors (NRTIs) or by non nucleoside RT inhibitors (NNRTIs). NRTIs act as chain terminators, whereas NNRTIs inhibit DNA polymerization by binding a small hydrophobic pocket near the RT active site and inducing an allosteric change in this region. Classical NRTIs are abacavir, adefovir (PMEA), didanosine (ddI), lamivudine (3TC), stavudine (d4T), tenofovir (PMPA), zalcitabine (ddC), and zidovudine (AZT). Classical NNRTIs are atevirdine (BHAP U-87201E), delavirdine, efavirenz (DMP-266), emivirine (I-EBU), and nevirapine (BI-RG-587). The tritherapies used as a basic effective treatment of AIDS associate two NRTIs and one NNRTI. Functionally, mediates, with Gag polyprotein, the essential events in virion assembly, including binding the plasma membrane, making the protein-protein interactions necessary to create spherical particles, recruiting the viral Env proteins, and packaging the genomic RNA via direct interactions with the RNA packaging sequence (Psi). Gag-Pol polyprotein may regulate its own translation, by the binding genomic RNA in the 5'-UTR. At low concentration, the polyprotein would promote translation, whereas at high concentration, the polyprotein would encapsidate genomic RNA and then shut off translation. In terms of biological role, targets the polyprotein to the plasma membrane via a multipartite membrane-binding signal, that includes its myristoylated N-terminus. Matrix protein is part of the pre-integration complex. Implicated in the release from host cell mediated by Vpu. Binds to RNA. Forms the conical core that encapsulates the genomic RNA-nucleocapsid complex in the virion. Most core are conical, with only 7% tubular. The core is constituted by capsid protein hexamer subunits. The core is disassembled soon after virion entry. Host restriction factors such as TRIM5-alpha or TRIMCyp bind retroviral capsids and cause premature capsid disassembly, leading to blocks in reverse transcription. Capsid restriction by TRIM5 is one of the factors which restricts HIV-1 to the human species. Host PIN1 apparently facilitates the virion uncoating. On the other hand, interactions with PDZD8 or CYPA stabilize the capsid. Its function is as follows. Encapsulates and protects viral dimeric unspliced genomic RNA (gRNA). Binds these RNAs through its zinc fingers. Acts as a nucleic acid chaperone which is involved in rearangement of nucleic acid secondary structure during gRNA retrotranscription. Also facilitates template switch leading to recombination. As part of the polyprotein, participates in gRNA dimerization, packaging, tRNA incorporation and virion assembly. Functionally, aspartyl protease that mediates proteolytic cleavages of Gag and Gag-Pol polyproteins during or shortly after the release of the virion from the plasma membrane. Cleavages take place as an ordered, step-wise cascade to yield mature proteins. This process is called maturation. Displays maximal activity during the budding process just prior to particle release from the cell. Also cleaves Nef and Vif, probably concomitantly with viral structural proteins on maturation of virus particles. Hydrolyzes host EIF4GI and PABP1 in order to shut off the capped cellular mRNA translation. The resulting inhibition of cellular protein synthesis serves to ensure maximal viral gene expression and to evade host immune response. In terms of biological role, multifunctional enzyme that converts the viral RNA genome into dsDNA in the cytoplasm, shortly after virus entry into the cell. This enzyme displays a DNA polymerase activity that can copy either DNA or RNA templates, and a ribonuclease H (RNase H) activity that cleaves the RNA strand of RNA-DNA heteroduplexes in a partially processive 3' to 5' endonucleasic mode. Conversion of viral genomic RNA into dsDNA requires many steps. A tRNA(3)-Lys binds to the primer-binding site (PBS) situated at the 5'-end of the viral RNA. RT uses the 3' end of the tRNA primer to perform a short round of RNA-dependent minus-strand DNA synthesis. The reading proceeds through the U5 region and ends after the repeated (R) region which is present at both ends of viral RNA. The portion of the RNA-DNA heteroduplex is digested by the RNase H, resulting in a ssDNA product attached to the tRNA primer. This ssDNA/tRNA hybridizes with the identical R region situated at the 3' end of viral RNA. This template exchange, known as minus-strand DNA strong stop transfer, can be either intra- or intermolecular. RT uses the 3' end of this newly synthesized short ssDNA to perform the RNA-dependent minus-strand DNA synthesis of the whole template. RNase H digests the RNA template except for two polypurine tracts (PPTs) situated at the 5'-end and near the center of the genome. It is not clear if both polymerase and RNase H activities are simultaneous. RNase H probably can proceed both in a polymerase-dependent (RNA cut into small fragments by the same RT performing DNA synthesis) and a polymerase-independent mode (cleavage of remaining RNA fragments by free RTs). Secondly, RT performs DNA-directed plus-strand DNA synthesis using the PPTs that have not been removed by RNase H as primers. PPTs and tRNA primers are then removed by RNase H. The 3' and 5' ssDNA PBS regions hybridize to form a circular dsDNA intermediate. Strand displacement synthesis by RT to the PBS and PPT ends produces a blunt ended, linear dsDNA copy of the viral genome that includes long terminal repeats (LTRs) at both ends. Catalyzes viral DNA integration into the host chromosome, by performing a series of DNA cutting and joining reactions. This enzyme activity takes place after virion entry into a cell and reverse transcription of the RNA genome in dsDNA. The first step in the integration process is 3' processing. This step requires a complex comprising the viral genome, matrix protein, Vpr and integrase. This complex is called the pre-integration complex (PIC). The integrase protein removes 2 nucleotides from each 3' end of the viral DNA, leaving recessed CA OH's at the 3' ends. In the second step, the PIC enters cell nucleus. This process is mediated through integrase and Vpr proteins, and allows the virus to infect a non dividing cell. This ability to enter the nucleus is specific of lentiviruses, other retroviruses cannot and rely on cell division to access cell chromosomes. In the third step, termed strand transfer, the integrase protein joins the previously processed 3' ends to the 5' ends of strands of target cellular DNA at the site of integration. The 5'-ends are produced by integrase-catalyzed staggered cuts, 5 bp apart. A Y-shaped, gapped, recombination intermediate results, with the 5'-ends of the viral DNA strands and the 3' ends of target DNA strands remaining unjoined, flanking a gap of 5 bp. The last step is viral DNA integration into host chromosome. This involves host DNA repair synthesis in which the 5 bp gaps between the unjoined strands are filled in and then ligated. Since this process occurs at both cuts flanking the HIV genome, a 5 bp duplication of host DNA is produced at the ends of HIV-1 integration. Alternatively, Integrase may catalyze the excision of viral DNA just after strand transfer, this is termed disintegration. The polypeptide is Gag-Pol polyprotein (gag-pol) (Homo sapiens (Human)).